The following is a 317-amino-acid chain: Ferrochelatase (317 aa).

Positions 187 and 268 each coordinate Fe cation.

It belongs to the ferrochelatase family.

The protein localises to the cytoplasm. The enzyme catalyses heme b + 2 H(+) = protoporphyrin IX + Fe(2+). It participates in porphyrin-containing compound metabolism; protoheme biosynthesis; protoheme from protoporphyrin-IX: step 1/1. Catalyzes the ferrous insertion into protoporphyrin IX. This Campylobacter concisus (strain 13826) protein is Ferrochelatase.